A 248-amino-acid chain; its full sequence is Phosphoribosylformylglycinamidine synthase subunit PurQ (248 aa).

In terms of domain architecture, Glutamine amidotransferase type-1 spans 6–248; the sequence is AMVLRMEGTN…IFFRILYNST (243 aa). C95 serves as the catalytic Nucleophile. Residues H215 and E217 contribute to the active site.

As to quaternary structure, part of the FGAM synthase complex composed of 1 PurL, 1 PurQ and 2 PurS subunits.

It localises to the cytoplasm. The enzyme catalyses N(2)-formyl-N(1)-(5-phospho-beta-D-ribosyl)glycinamide + L-glutamine + ATP + H2O = 2-formamido-N(1)-(5-O-phospho-beta-D-ribosyl)acetamidine + L-glutamate + ADP + phosphate + H(+). It catalyses the reaction L-glutamine + H2O = L-glutamate + NH4(+). It participates in purine metabolism; IMP biosynthesis via de novo pathway; 5-amino-1-(5-phospho-D-ribosyl)imidazole from N(2)-formyl-N(1)-(5-phospho-D-ribosyl)glycinamide: step 1/2. In terms of biological role, part of the phosphoribosylformylglycinamidine synthase complex involved in the purines biosynthetic pathway. Catalyzes the ATP-dependent conversion of formylglycinamide ribonucleotide (FGAR) and glutamine to yield formylglycinamidine ribonucleotide (FGAM) and glutamate. The FGAM synthase complex is composed of three subunits. PurQ produces an ammonia molecule by converting glutamine to glutamate. PurL transfers the ammonia molecule to FGAR to form FGAM in an ATP-dependent manner. PurS interacts with PurQ and PurL and is thought to assist in the transfer of the ammonia molecule from PurQ to PurL. This Picrophilus torridus (strain ATCC 700027 / DSM 9790 / JCM 10055 / NBRC 100828 / KAW 2/3) protein is Phosphoribosylformylglycinamidine synthase subunit PurQ.